A 258-amino-acid polypeptide reads, in one-letter code: MVLIRVLANLLILQLSYAQKSSELVIGGDECNINEHRSLVAIFNSTKFFCSGTLINQEWVVTAAHCDSTNFKMKLGVHSKKVPNENEQTRNPKEKFFCPNKKKDDVLDKDIMLIKLDSPVSNSEHIAPLSLPSSPPSVGSVCHIMGWGSITPIEKTLPDVPYCANINLLDDAVCRPPYPELPATSRTLCAGILEGGKDTCRGDSGGPLICNGQFQGIVFYGAHPCGQALKPGVYTKVFDYNDWIQSIIAGNTAATCPP.

Positions 1–18 are cleaved as a signal peptide; it reads MVLIRVLANLLILQLSYA. Residues 19–24 constitute a propeptide that is removed on maturation; the sequence is QKSSEL. Residues 25 to 249 enclose the Peptidase S1 domain; it reads VIGGDECNIN…YNDWIQSIIA (225 aa). Intrachain disulfides connect C31-C163, C50-C66, C98-C256, C142-C210, C174-C189, and C200-C225. N-linked (GlcNAc...) asparagine glycosylation is present at N44. Residues H65 and D110 each act as charge relay system in the active site. S204 (charge relay system) is an active-site residue.

It belongs to the peptidase S1 family. Snake venom subfamily. As to quaternary structure, monomer. As to expression, expressed by the venom gland.

The protein localises to the secreted. Its function is as follows. Snake venom serine protease that may act in the hemostasis system of the prey. This chain is Snake venom serine proteinase 8, found in Crotalus adamanteus (Eastern diamondback rattlesnake).